Here is a 460-residue protein sequence, read N- to C-terminus: Ribulose bisphosphate carboxylase large chain (460 aa).

K4 bears the N6,N6,N6-trimethyllysine mark. N113 and T163 together coordinate substrate. Residue K165 is the Proton acceptor of the active site. K167 is a binding site for substrate. Mg(2+) is bound by residues K191, D193, and E194. An N6-carboxylysine modification is found at K191. Residue H284 is the Proton acceptor of the active site. Positions 285, 317, and 369 each coordinate substrate.

It belongs to the RuBisCO large chain family. Type I subfamily. In terms of assembly, heterohexadecamer of 8 large chains and 8 small chains. Mg(2+) serves as cofactor.

The protein resides in the plastid. The protein localises to the chloroplast. The catalysed reaction is 2 (2R)-3-phosphoglycerate + 2 H(+) = D-ribulose 1,5-bisphosphate + CO2 + H2O. It carries out the reaction D-ribulose 1,5-bisphosphate + O2 = 2-phosphoglycolate + (2R)-3-phosphoglycerate + 2 H(+). RuBisCO catalyzes two reactions: the carboxylation of D-ribulose 1,5-bisphosphate, the primary event in carbon dioxide fixation, as well as the oxidative fragmentation of the pentose substrate in the photorespiration process. Both reactions occur simultaneously and in competition at the same active site. This chain is Ribulose bisphosphate carboxylase large chain, found in Cunninghamia lanceolata (China fir).